Reading from the N-terminus, the 27-residue chain is Small ribosomal subunit protein bTHX (27 aa).

Residues 1–13 are compositionally biased toward basic residues; it reads MGKGDRRTRRGKI. Positions 1 to 27 are disordered; it reads MGKGDRRTRRGKIWRGTYGKYRPRKKK.

This sequence belongs to the bacterial ribosomal protein bTHX family. In terms of assembly, part of the 30S ribosomal subunit.

Functionally, binds at the top of the head of the 30S subunit. It stabilizes a number of different RNA elements and thus is important for subunit structure. The chain is Small ribosomal subunit protein bTHX (rpsU) from Thermus aquaticus.